The following is a 396-amino-acid chain: Elongation factor Tu (396 aa).

The region spanning 10-205 is the tr-type G domain; it reads KSHANIGTIG…AVDEYIPTPE (196 aa). Positions 19–26 are G1; that stretch reads GHVDHGKT. Position 19 to 26 (19 to 26) interacts with GTP; it reads GHVDHGKT. A Mg(2+)-binding site is contributed by threonine 26. A G2 region spans residues 61-65; sequence GITIS. Residues 82–85 form a G3 region; it reads DCPG. GTP is bound by residues 82-86 and 137-140; these read DCPGH and NKCD. The G4 stretch occupies residues 137-140; it reads NKCD. Residues 175-177 are G5; the sequence is SAL.

The protein belongs to the TRAFAC class translation factor GTPase superfamily. Classic translation factor GTPase family. EF-Tu/EF-1A subfamily. In terms of assembly, monomer.

The protein resides in the cytoplasm. The enzyme catalyses GTP + H2O = GDP + phosphate + H(+). Functionally, GTP hydrolase that promotes the GTP-dependent binding of aminoacyl-tRNA to the A-site of ribosomes during protein biosynthesis. In Bacillus pumilus (strain SAFR-032), this protein is Elongation factor Tu.